Reading from the N-terminus, the 542-residue chain is Chaperonin GroEL (542 aa).

ATP-binding positions include 29-32 (TMGP), lysine 50, 86-90 (DGTTT), glycine 414, 477-479 (NAA), and aspartate 493.

This sequence belongs to the chaperonin (HSP60) family. Forms a cylinder of 14 subunits composed of two heptameric rings stacked back-to-back. Interacts with the co-chaperonin GroES.

It is found in the cytoplasm. The catalysed reaction is ATP + H2O + a folded polypeptide = ADP + phosphate + an unfolded polypeptide.. Functionally, together with its co-chaperonin GroES, plays an essential role in assisting protein folding. The GroEL-GroES system forms a nano-cage that allows encapsulation of the non-native substrate proteins and provides a physical environment optimized to promote and accelerate protein folding. The chain is Chaperonin GroEL from Sulfurovum sp. (strain NBC37-1).